The following is a 60-amino-acid chain: Large ribosomal subunit protein uL30 (60 aa).

Belongs to the universal ribosomal protein uL30 family. Part of the 50S ribosomal subunit.

The chain is Large ribosomal subunit protein uL30 from Albidiferax ferrireducens (strain ATCC BAA-621 / DSM 15236 / T118) (Rhodoferax ferrireducens).